The chain runs to 195 residues: Imidazoleglycerol-phosphate dehydratase (195 aa).

It belongs to the imidazoleglycerol-phosphate dehydratase family.

It localises to the cytoplasm. It catalyses the reaction D-erythro-1-(imidazol-4-yl)glycerol 3-phosphate = 3-(imidazol-4-yl)-2-oxopropyl phosphate + H2O. It participates in amino-acid biosynthesis; L-histidine biosynthesis; L-histidine from 5-phospho-alpha-D-ribose 1-diphosphate: step 6/9. This chain is Imidazoleglycerol-phosphate dehydratase, found in Azoarcus sp. (strain BH72).